Consider the following 300-residue polypeptide: Ribonuclease HIII (300 aa).

In terms of domain architecture, RNase H type-2 spans 83–300 (IPIIGSDEVG…THKAQALLTK (218 aa)). Residues D89, E90, and D194 each coordinate a divalent metal cation.

It belongs to the RNase HII family. RnhC subfamily. Requires Mn(2+) as cofactor. Mg(2+) serves as cofactor.

Its subcellular location is the cytoplasm. The enzyme catalyses Endonucleolytic cleavage to 5'-phosphomonoester.. Functionally, endonuclease that specifically degrades the RNA of RNA-DNA hybrids. The polypeptide is Ribonuclease HIII (Streptococcus pyogenes serotype M4 (strain MGAS10750)).